The primary structure comprises 171 residues: Superoxide dismutase [Cu-Zn] 2 (171 aa).

Residues 1-20 form the signal peptide; it reads MKKLSGVLAGSLLLISASFS. Cu cation-binding residues include histidine 67, histidine 69, and histidine 85. A disulfide bridge connects residues cysteine 74 and cysteine 167. Histidine 85, histidine 93, histidine 102, and aspartate 105 together coordinate Zn(2+). Histidine 147 contributes to the Cu cation binding site.

Belongs to the Cu-Zn superoxide dismutase family. It depends on Cu cation as a cofactor. The cofactor is Zn(2+).

It catalyses the reaction 2 superoxide + 2 H(+) = H2O2 + O2. Its function is as follows. Destroys radicals which are normally produced within the cells and which are toxic to biological systems. The chain is Superoxide dismutase [Cu-Zn] 2 (sodC2) from Aquifex aeolicus (strain VF5).